The following is a 1017-amino-acid chain: Stereoselective keto-reductase af490 (1017 aa).

Residues 6-138 are N-terminal hotdog fold; that stretch reads NELSGSQVPG…GRLRMTFAGH (133 aa). The region spanning 6–311 is the PKS/mFAS DH domain; the sequence is NELSGSQVPG…MSPIAPSTEK (306 aa). The tract at residues 8–306 is dehydratase (DH); that stretch reads LSGSQVPGAT…LEGLTMSPIA (299 aa). Residues 153–311 are C-terminal hotdog fold; sequence LRPVSISPFY…MSPIAPSTEK (159 aa). A ketoreductase (KR) region spans residues 532–720; sequence QIRFLRAPFD…VQGGRLLIPR (189 aa).

The catalysed reaction is fumagillol + NADP(+) = 5-dehydrofumagillol + NADPH + H(+). It functions in the pathway secondary metabolite biosynthesis; terpenoid biosynthesis. Its function is as follows. Stereoselective keto-reductase; part of the gene cluster that mediates the biosynthesis of fumagillin, a meroterpenoid that has numerous biological activities including irreversible inhibition of human type 2 methionine aminopeptidase (METAP2). Within the pathway, the keto-reductase af490 acts as a 5-dehydrofumagillol 5-reductase that stereoselectively reduces 5-keto-fumagillol to 5R-hydroxy-seco-sesquiterpene. The pathway begins with the conversion of farnesyl pyrophosphate (FPP) to beta-trans-bergamotene by the membrane-bound beta-trans-bergamotene synthase af520. The multifunctional cytochrome P450 monooxygenase af510 then converts beta-trans-bergamotene into 5-keto-demethoxyfumagillol via several oxydation steps. 5-keto-demethoxyfumagillol is then subjected to successive C-6 hydroxylation and O-methylation by the dioxygenase af480 and O-methyltransferase af390-400, respectively, to yield 5-keto-fumagillol, which is then stereoselectively reduced by the keto-reductase af490 to 5R-hydroxy-seco-sesquiterpene. The next step is the polyketide transferase af380-catalyzed transfer of a dodecapentaenoyl group synthesized by the polyketide synthase af370 onto 5R-hydroxy-seco-sesquiterpene which leads to the production of prefumagillin. Finally, oxidative cleavage by the monooxygenase af470 converts prefumagillin to fumagillin. This chain is Stereoselective keto-reductase af490, found in Aspergillus fumigatus (strain ATCC MYA-4609 / CBS 101355 / FGSC A1100 / Af293) (Neosartorya fumigata).